The following is a 360-amino-acid chain: Mannitol-1-phosphate 5-dehydrogenase (360 aa).

Residue 6–17 participates in NAD(+) binding; it reads ALHFGAGNIGRG.

The protein belongs to the mannitol dehydrogenase family.

It catalyses the reaction D-mannitol 1-phosphate + NAD(+) = beta-D-fructose 6-phosphate + NADH + H(+). This is Mannitol-1-phosphate 5-dehydrogenase from Mycoplasmopsis pulmonis (strain UAB CTIP) (Mycoplasma pulmonis).